The primary structure comprises 212 residues: Orotate phosphoribosyltransferase (212 aa).

5-phospho-alpha-D-ribose 1-diphosphate is bound by residues Arg97, Lys101, His103, and 123–131 (EDLISTGGS). Ser127 provides a ligand contact to orotate.

This sequence belongs to the purine/pyrimidine phosphoribosyltransferase family. PyrE subfamily. Homodimer. The cofactor is Mg(2+).

It carries out the reaction orotidine 5'-phosphate + diphosphate = orotate + 5-phospho-alpha-D-ribose 1-diphosphate. Its pathway is pyrimidine metabolism; UMP biosynthesis via de novo pathway; UMP from orotate: step 1/2. Its function is as follows. Catalyzes the transfer of a ribosyl phosphate group from 5-phosphoribose 1-diphosphate to orotate, leading to the formation of orotidine monophosphate (OMP). The chain is Orotate phosphoribosyltransferase from Bacteroides thetaiotaomicron (strain ATCC 29148 / DSM 2079 / JCM 5827 / CCUG 10774 / NCTC 10582 / VPI-5482 / E50).